Reading from the N-terminus, the 433-residue chain is MPVAVIESLDHEGRGVAHVDGKVVFVEGALAGEQVEYTVYRQRPSYDLAEATRIIKASAQRVRPRCEHFGVCGGCSMQHLDSVAQAAAKQRVLEDALWHVGKVRPDIIYAAIHGPSWGYRYRARIGVRVVPKKGGVLIGFHERRSSYIADMRSCPILPPHVSGMLPALHELVGGLSIADRLPQIEIAIGDTAIVLVFRNLLPLTPADEARLAAFAGEHGVQVWLQPGAPATAHPLHPKGAAPLAYTLPEFDVAMAFQPTDFTQVNIDINRLLIRRSLQLLDPRPGERIADLFCGLGNFSLPIARCGATVVGVEGSESLVRRAAKNARRNGLHGRSEFHAANLFEATEDSLAALGRLDKLLIDPPREGAIAVVKALSTLQSPARIVYVSCNPATLARDAAVLVHEKGYVLRGAGIANMFPQTSHVESIALFERN.

One can recognise a TRAM domain in the interval 1-53; the sequence is MPVAVIESLDHEGRGVAHVDGKVVFVEGALAGEQVEYTVYRQRPSYDLAEATR. [4Fe-4S] cluster contacts are provided by C66, C72, C75, and C154. Residues Q263, F292, N297, E313, N341, and D362 each contribute to the S-adenosyl-L-methionine site. Residue C389 is the Nucleophile of the active site.

The protein belongs to the class I-like SAM-binding methyltransferase superfamily. RNA M5U methyltransferase family. RlmD subfamily.

The enzyme catalyses uridine(1939) in 23S rRNA + S-adenosyl-L-methionine = 5-methyluridine(1939) in 23S rRNA + S-adenosyl-L-homocysteine + H(+). Catalyzes the formation of 5-methyl-uridine at position 1939 (m5U1939) in 23S rRNA. The polypeptide is 23S rRNA (uracil(1939)-C(5))-methyltransferase RlmD (Aromatoleum aromaticum (strain DSM 19018 / LMG 30748 / EbN1) (Azoarcus sp. (strain EbN1))).